Reading from the N-terminus, the 876-residue chain is Alanine--tRNA ligase (876 aa).

K74 is modified (N6-acetyllysine). Zn(2+) is bound by residues H564, H568, C666, and H670.

This sequence belongs to the class-II aminoacyl-tRNA synthetase family. Homotetramer. The cofactor is Zn(2+).

Its subcellular location is the cytoplasm. The enzyme catalyses tRNA(Ala) + L-alanine + ATP = L-alanyl-tRNA(Ala) + AMP + diphosphate. Its function is as follows. Catalyzes the attachment of alanine to tRNA(Ala) in a two-step reaction: alanine is first activated by ATP to form Ala-AMP and then transferred to the acceptor end of tRNA(Ala). Also edits incorrectly charged Ser-tRNA(Ala) and Gly-tRNA(Ala) via its editing domain. This Shigella flexneri serotype 5b (strain 8401) protein is Alanine--tRNA ligase.